A 165-amino-acid chain; its full sequence is Shikimate kinase (165 aa).

11 to 16 (GAGKTT) contacts ATP. Threonine 15 is a binding site for Mg(2+). Substrate contacts are provided by aspartate 33, arginine 57, and glycine 78. An ATP-binding site is contributed by arginine 116. Arginine 134 lines the substrate pocket.

It belongs to the shikimate kinase family. Monomer. Mg(2+) serves as cofactor.

It localises to the cytoplasm. The catalysed reaction is shikimate + ATP = 3-phosphoshikimate + ADP + H(+). The protein operates within metabolic intermediate biosynthesis; chorismate biosynthesis; chorismate from D-erythrose 4-phosphate and phosphoenolpyruvate: step 5/7. Its function is as follows. Catalyzes the specific phosphorylation of the 3-hydroxyl group of shikimic acid using ATP as a cosubstrate. The polypeptide is Shikimate kinase (Bacillus cereus (strain G9842)).